The chain runs to 319 residues: uncharacterized protein (319 aa).

The disordered stretch occupies residues 281–319; the sequence is KVERKQRRRDDQNIMRSKLPQQRQNPFCSTERPKRARCD. Over residues 299 to 308 the composition is skewed to polar residues; sequence LPQQRQNPFC.

The protein localises to the cytoplasm. It localises to the nucleus. This is an uncharacterized protein from Saccharomyces cerevisiae (strain ATCC 204508 / S288c) (Baker's yeast).